Here is a 185-residue protein sequence, read N- to C-terminus: Orotate phosphoribosyltransferase (185 aa).

Residues R99, K100, K103, and 125 to 133 (EDVTTTGGS) each bind 5-phospho-alpha-D-ribose 1-diphosphate. T129 and R157 together coordinate orotate.

The protein belongs to the purine/pyrimidine phosphoribosyltransferase family. PyrE subfamily. As to quaternary structure, homodimer. Requires Mg(2+) as cofactor.

The enzyme catalyses orotidine 5'-phosphate + diphosphate = orotate + 5-phospho-alpha-D-ribose 1-diphosphate. It functions in the pathway pyrimidine metabolism; UMP biosynthesis via de novo pathway; UMP from orotate: step 1/2. In terms of biological role, catalyzes the transfer of a ribosyl phosphate group from 5-phosphoribose 1-diphosphate to orotate, leading to the formation of orotidine monophosphate (OMP). The protein is Orotate phosphoribosyltransferase of Methanococcus maripaludis (strain DSM 14266 / JCM 13030 / NBRC 101832 / S2 / LL).